A 769-amino-acid polypeptide reads, in one-letter code: Serine protease HtrA-like (769 aa).

Basic residues predominate over residues 1–20 (MDIGKKHVIPKSQYRRKRRE). The segment at 1-390 (MDIGKKHVIP…ATSKLNKGRA (390 aa)) is disordered. Composition is skewed to basic and acidic residues over residues 21 to 64 (FFHN…ERFK) and 71 to 108 (LEQR…DVSK). Over residues 126-137 (YEQNSEATLSTK) the composition is skewed to polar residues. Positions 138–186 (STDKVESTEMRKLSSDKNKVGHEEQHVLSKPSEHDKETRIDSESSRTDS) are enriched in basic and acidic residues. The segment covering 247–262 (QQSQNEQTKTYTYGDS) has biased composition (polar residues). Composition is skewed to basic and acidic residues over residues 264–296 (QNDK…HIVD) and 310–330 (KTDD…HKQN). The segment covering 331–347 (ADSSETVGYQSQSTASH) has biased composition (polar residues). The span at 348–364 (RSTEKRNISINDHDKLN) shows a compositional bias: basic and acidic residues. Over residues 365–390 (GQKTNTKTSANNNQKKATSKLNKGRA) the composition is skewed to polar residues. The chain crosses the membrane as a helical span at residues 410 to 430 (LVILMGIIILIVILNAIFNNV). Active-site charge relay system residues include H504, D534, and S619. In terms of domain architecture, PDZ spans 680–733 (IVSLNSFERQAVKLPGKVKNGVVVDQVDNNGLADQSGLKKGDVITELDGKLLED).

This sequence belongs to the peptidase S1C family.

The protein localises to the cell membrane. The chain is Serine protease HtrA-like from Staphylococcus aureus (strain NCTC 8325 / PS 47).